The following is a 224-amino-acid chain: (S)-2-haloacid dehalogenase H-109 (224 aa).

The active-site Nucleophile is Asp10. An (S)-2-haloacid is bound by residues 11 to 12, Arg41, and 118 to 119; these read LY and SN. The important for catalytic activity stretch occupies residues 175–180; it reads SSNSWD.

Belongs to the HAD-like hydrolase superfamily. S-2-haloalkanoic acid dehalogenase family.

It catalyses the reaction an (S)-2-haloacid + H2O = a (2R)-2-hydroxycarboxylate + a halide anion + H(+). It carries out the reaction (S)-2-chloropropanoate + H2O = (R)-lactate + chloride + H(+). Catalyzes the hydrolytic dehalogenation of small (S)-2-haloalkanoic acids to yield the corresponding (R)-2-hydroxyalkanoic acids. Acts on acids of short chain lengths, C(2) to C(4), with inversion of configuration at C-2. Active with 2-halogenated carboxylic acids and converts only the S-isomer (or L-isomer) of 2-chloropropionic acid with inversion of configuration to produce R-lactate (or D-isomer). This Pseudomonas putida (Arthrobacter siderocapsulatus) protein is (S)-2-haloacid dehalogenase H-109.